The primary structure comprises 38 residues: CHH precursor-related peptide (38 aa).

The interval 18-38 (GALEPSTPLGDLSGSLGHPVE) is disordered.

As to expression, produced by the medulla terminalis X-organ in the eyestalks and transported to the sinus gland where it is stored and released.

The protein localises to the secreted. The chain is CHH precursor-related peptide from Cancer pagurus (Rock crab).